A 172-amino-acid polypeptide reads, in one-letter code: Large ribosomal subunit protein bL17m (172 aa).

Residues 1–8 (MRLSFAAA) constitute a mitochondrion transit peptide.

This sequence belongs to the bacterial ribosomal protein bL17 family. In terms of assembly, component of the mitochondrial ribosome large subunit (39S) which comprises a 16S rRNA and about 50 distinct proteins.

Its subcellular location is the mitochondrion. The chain is Large ribosomal subunit protein bL17m (MRPL17) from Bos taurus (Bovine).